Consider the following 638-residue polypeptide: Chaperone protein DnaK (638 aa).

A Phosphothreonine; by autocatalysis modification is found at Thr198. Over residues 603 to 618 the composition is skewed to low complexity; it reads QQAQAQQAQGADADAQ. Residues 603–638 form a disordered region; that stretch reads QQAQAQQAQGADADAQQSKEDDVVDAEFEEVKDDKK. A compositionally biased stretch (acidic residues) spans 624-638; the sequence is DVVDAEFEEVKDDKK.

This sequence belongs to the heat shock protein 70 family.

Its function is as follows. Acts as a chaperone. The polypeptide is Chaperone protein DnaK (Vibrio campbellii (strain ATCC BAA-1116)).